The sequence spans 158 residues: Glutathione peroxidase homolog BsaA (158 aa).

Thr36 is an active-site residue.

Belongs to the glutathione peroxidase family.

In Staphylococcus epidermidis (strain ATCC 35984 / DSM 28319 / BCRC 17069 / CCUG 31568 / BM 3577 / RP62A), this protein is Glutathione peroxidase homolog BsaA (bsaA).